Reading from the N-terminus, the 248-residue chain is Transmembrane protein 182 (248 aa).

A signal peptide spans 1 to 26; sequence MKIHVAGFFAGLFGALATLFILLSFG. The Extracellular portion of the chain corresponds to 27–136; it reads TDYWLLASET…IIYRGFWSVS (110 aa). Residues Asn66 and Asn119 are each glycosylated (N-linked (GlcNAc...) asparagine). The helical transmembrane segment at 137–157 threads the bilayer; the sequence is MLVGVAAVVAGGFIIICAAPF. Residues 158–167 lie on the Cytoplasmic side of the membrane; the sequence is ASHRLYKAGG. A helical membrane pass occupies residues 168 to 188; that stretch reads GLYLISGFFVLVVTAMYVIWI. The Extracellular segment spans residues 189-218; that stretch reads DVLDVISLYTEYQKLNKCADFELNKTYGLS. N-linked (GlcNAc...) asparagine glycosylation is present at Asn212. The chain crosses the membrane as a helical span at residues 219–239; that stretch reads FMFAPVGVFFCFLSGLLFLVI. Residues 240–248 lie on the Cytoplasmic side of the membrane; the sequence is GRTVHHQYN.

It belongs to the TMEM182 family.

The protein localises to the cell membrane. May negatively regulate myogenesis and skeletal muscle regeneration. This chain is Transmembrane protein 182 (tmem182a), found in Danio rerio (Zebrafish).